Reading from the N-terminus, the 376-residue chain is tRNA (guanine(26)-N(2))-dimethyltransferase (376 aa).

The Trm1 methyltransferase domain maps to V4–M373. Residues R36, R61, D78, D120, and A121 each contribute to the S-adenosyl-L-methionine site.

Belongs to the class I-like SAM-binding methyltransferase superfamily. Trm1 family.

The enzyme catalyses guanosine(26) in tRNA + 2 S-adenosyl-L-methionine = N(2)-dimethylguanosine(26) in tRNA + 2 S-adenosyl-L-homocysteine + 2 H(+). Dimethylates a single guanine residue at position 26 of a number of tRNAs using S-adenosyl-L-methionine as donor of the methyl groups. This is tRNA (guanine(26)-N(2))-dimethyltransferase from Thermococcus kodakarensis (strain ATCC BAA-918 / JCM 12380 / KOD1) (Pyrococcus kodakaraensis (strain KOD1)).